We begin with the raw amino-acid sequence, 205 residues long: Probable GTP-binding protein EngB (205 aa).

The EngB-type G domain occupies Gln-27–Gly-201. GTP contacts are provided by residues Gly-35–Ser-42, Gly-62–Leu-66, Asp-80–Gly-83, Thr-147–Asp-150, and Phe-180–Ser-182. The Mg(2+) site is built by Ser-42 and Thr-64.

It belongs to the TRAFAC class TrmE-Era-EngA-EngB-Septin-like GTPase superfamily. EngB GTPase family. The cofactor is Mg(2+).

Its function is as follows. Necessary for normal cell division and for the maintenance of normal septation. The chain is Probable GTP-binding protein EngB from Hamiltonella defensa subsp. Acyrthosiphon pisum (strain 5AT).